A 975-amino-acid polypeptide reads, in one-letter code: Probable ATP-dependent RNA helicase CG8611 (975 aa).

A compositionally biased stretch (polar residues) spans 1-24; that stretch reads MVENISLNVTVKSSARKNQQQSPA. 3 disordered regions span residues 1-38, 50-104, and 127-295; these read MVEN…QDFD, AIVV…DDLM, and TTKP…FRTK. Residues 64–94 are compositionally biased toward low complexity; it reads PTNSSVPNTTKSPTPSVSSSKSAISTLSASP. A phosphoserine mark is found at Ser75 and Ser99. Positions 190-203 are enriched in basic and acidic residues; that stretch reads QLEEERRQKRREEG. Residues Ser210, Ser220, and Ser224 each carry the phosphoserine modification. Positions 242-261 are enriched in acidic residues; that stretch reads IEDSGESGEESATSDEEPDE. Positions 269–285 are enriched in basic and acidic residues; sequence QEKEPKQTAKKPPKAEE. Positions 327–356 match the Q motif motif; the sequence is SKISTLGLHPHAVKNLEDLLSIRELTSVQQ. Positions 359 to 548 constitute a Helicase ATP-binding domain; sequence IPEVLQGKDV…GLTLKNPLYI (190 aa). ATP is bound at residue 372-379; sequence SQTGSGKT. The short motif at 485-488 is the DEAD box element; sequence DEAD. Residues 616–789 form the Helicase C-terminal domain; sequence LLAKEVDASP…DMYAYLQTLL (174 aa). Ser667 is modified (phosphoserine). Disordered stretches follow at residues 915 to 942 and 955 to 975; these read LQQR…VGRS and NMSE…RKQA.

The protein belongs to the DEAD box helicase family. DDX31/DBP7 subfamily.

The enzyme catalyses ATP + H2O = ADP + phosphate + H(+). Functionally, probable ATP-dependent RNA helicase. This Drosophila melanogaster (Fruit fly) protein is Probable ATP-dependent RNA helicase CG8611.